Here is a 106-residue protein sequence, read N- to C-terminus: Small ribosomal subunit protein bS20 (106 aa).

Over residues 1 to 32 the composition is skewed to basic residues; the sequence is MAQKKPKRNLSALKRHRQSLKRRLRNKAKKSA. The interval 1 to 33 is disordered; sequence MAQKKPKRNLSALKRHRQSLKRRLRNKAKKSAI.

Belongs to the bacterial ribosomal protein bS20 family.

Its function is as follows. Binds directly to 16S ribosomal RNA. In Thermus thermophilus (strain ATCC BAA-163 / DSM 7039 / HB27), this protein is Small ribosomal subunit protein bS20 (rpsT).